Consider the following 141-residue polypeptide: Nucleoside diphosphate kinase (141 aa).

ATP contacts are provided by lysine 11, phenylalanine 59, arginine 87, threonine 93, arginine 104, and asparagine 114. Histidine 117 acts as the Pros-phosphohistidine intermediate in catalysis.

The protein belongs to the NDK family. Homotetramer. Requires Mg(2+) as cofactor.

The protein localises to the cytoplasm. The catalysed reaction is a 2'-deoxyribonucleoside 5'-diphosphate + ATP = a 2'-deoxyribonucleoside 5'-triphosphate + ADP. The enzyme catalyses a ribonucleoside 5'-diphosphate + ATP = a ribonucleoside 5'-triphosphate + ADP. In terms of biological role, major role in the synthesis of nucleoside triphosphates other than ATP. The ATP gamma phosphate is transferred to the NDP beta phosphate via a ping-pong mechanism, using a phosphorylated active-site intermediate. This chain is Nucleoside diphosphate kinase, found in Pseudomonas putida (strain GB-1).